Reading from the N-terminus, the 945-residue chain is Leucine--tRNA ligase (945 aa).

Positions 43–53 (PYPNGAVHIGH) match the 'HIGH' region motif. The 'KMSKS' region motif lies at 638-642 (KMSKS). Lysine 641 is a binding site for ATP.

It belongs to the class-I aminoacyl-tRNA synthetase family.

The protein localises to the cytoplasm. The enzyme catalyses tRNA(Leu) + L-leucine + ATP = L-leucyl-tRNA(Leu) + AMP + diphosphate. The polypeptide is Leucine--tRNA ligase (Pyrobaculum islandicum (strain DSM 4184 / JCM 9189 / GEO3)).